We begin with the raw amino-acid sequence, 364 residues long: Chorismate synthase (364 aa).

Residue R47 participates in NADP(+) binding. Residues R125–S127, G285, K300–S304, and R327 each bind FMN.

This sequence belongs to the chorismate synthase family. As to quaternary structure, homotetramer. FMNH2 is required as a cofactor.

The catalysed reaction is 5-O-(1-carboxyvinyl)-3-phosphoshikimate = chorismate + phosphate. It participates in metabolic intermediate biosynthesis; chorismate biosynthesis; chorismate from D-erythrose 4-phosphate and phosphoenolpyruvate: step 7/7. In terms of biological role, catalyzes the anti-1,4-elimination of the C-3 phosphate and the C-6 proR hydrogen from 5-enolpyruvylshikimate-3-phosphate (EPSP) to yield chorismate, which is the branch point compound that serves as the starting substrate for the three terminal pathways of aromatic amino acid biosynthesis. This reaction introduces a second double bond into the aromatic ring system. In Dehalococcoides mccartyi (strain ATCC BAA-2100 / JCM 16839 / KCTC 5957 / BAV1), this protein is Chorismate synthase.